Consider the following 844-residue polypeptide: E3 ubiquitin-protein ligase BRE1-like 2 (844 aa).

Coiled coils occupy residues 1-38 and 160-240; these read MDAA…RDEQ and EDVI…QLQT. Residues 244 to 269 are disordered; sequence SLMNTSAPNGVNGSVSTDKSSDKGMG. Residues 245 to 261 show a composition bias toward polar residues; sequence LMNTSAPNGVNGSVSTD. Coiled coils occupy residues 290–604 and 640–670; these read ELHE…SEIE and KMKQ…ESSK. The segment at 792–831 adopts an RING-type zinc-finger fold; that stretch reads CGVCFDRPKEVVITKCFHLFCSPCIQRNLEIRHRKCPGCG.

It belongs to the BRE1 family.

It is found in the nucleus. The catalysed reaction is S-ubiquitinyl-[E2 ubiquitin-conjugating enzyme]-L-cysteine + [acceptor protein]-L-lysine = [E2 ubiquitin-conjugating enzyme]-L-cysteine + N(6)-ubiquitinyl-[acceptor protein]-L-lysine.. It participates in protein modification; protein ubiquitination. Its function is as follows. E3 ubiquitin-protein ligase that monoubiquitinates H2B to form H2BK143ub1. H2BK143ub1 gives a specific tag for epigenetic transcriptional activation and is also prerequisite for H3K4me and maybe H3K79me. It thereby plays a central role in histone code and gene regulation. Forms a ubiquitin ligase complex in cooperation with the E2 enzyme UBC2/RAD6. The chain is E3 ubiquitin-protein ligase BRE1-like 2 (BRE1B) from Oryza sativa subsp. indica (Rice).